The sequence spans 359 residues: 4-galactosyl-N-acetylglucosaminide 3-alpha-L-fucosyltransferase FUT6 (359 aa).

At 1 to 14 (MDPLGPAKPQWSCR) the chain is on the cytoplasmic side. A helical; Signal-anchor for type II membrane protein membrane pass occupies residues 15–34 (CCLTTLLFQLLVAVCFFSYL). Over 35 to 359 (RVSRDDPTVY…QTRSITAWFT (325 aa)) the chain is Lumenal. Residues asparagine 46, asparagine 91, asparagine 153, and asparagine 184 are each glycosylated (N-linked (GlcNAc...) asparagine). Residues 73 to 112 (KPTALPRCSEMLPGTADCNITADRKVYPQADAVIVHHREV) are determines site-specific fucosylation.

The protein belongs to the glycosyltransferase 10 family. As to quaternary structure, homodimer and monomer. Monomer (secreted form). N-glycosylated. In terms of processing, proteolytic cleavage releases a secreted glycoform of 43 kDa.

The protein resides in the golgi apparatus. Its subcellular location is the golgi stack membrane. It is found in the secreted. The catalysed reaction is a beta-D-galactosyl-(1-&gt;4)-N-acetyl-beta-D-glucosaminyl derivative + GDP-beta-L-fucose = a beta-D-galactosyl-(1-&gt;4)-[alpha-L-fucosyl-(1-&gt;3)]-N-acetyl-beta-D-glucosaminyl derivative + GDP + H(+). It catalyses the reaction an N-acetyl-alpha-neuraminyl-(2-&gt;3)-beta-D-galactosyl-(1-&gt;4)-N-acetyl-beta-D-glucosaminyl derivative + GDP-beta-L-fucose = an alpha-Neu5Ac-(2-&gt;3)-beta-D-Gal-(1-&gt;4)-[alpha-L-Fuc-(1-&gt;3)]-beta-D-GlcNAc derivative + GDP + H(+). It carries out the reaction an alpha-Neu5Ac-(2-&gt;3)-beta-D-Gal-(1-&gt;4)-beta-D-GlcNAc-(1-&gt;3)-beta-D-Gal-(1-&gt;4)-[alpha-L-Fuc-(1-&gt;3)]-beta-D-GlcNAc derivative + GDP-beta-L-fucose = an alpha-Neu5Ac-(2-&gt;3)-beta-D-Gal-(1-&gt;4)-[alpha-L-Fuc-(1-&gt;3)]-beta-D-GlcNAc-(1-&gt;3)-beta-D-Gal-(1-&gt;4)-[alpha-L-Fuc-(1-&gt;3)]-beta-D-GlcNAc derivative + GDP + H(+). The enzyme catalyses a neolactoside nLc6Cer + GDP-beta-L-fucose = beta-D-Gal-(1-&gt;4)-[alpha-L-Fuc-(1-&gt;3)]-beta-D-GlcNAc-(1-&gt;3)-beta-D-Gal-(1-&gt;4)-beta-D-GlcNAc-(1-&gt;3)-beta-D-Gal-(1-&gt;4)-beta-D-Glc-(1&lt;-&gt;1')-Cer + GDP + H(+). The catalysed reaction is a neolactoside nLc6Cer + GDP-beta-L-fucose = beta-D-galactosyl-(1-&gt;4)-N-acetyl-beta-D-glucosaminyl-(1-&gt;3)-beta-D-galactosyl-(1-&gt;4)-[alpha-L-fucosyl-(1-&gt;3)]-N-acetyl-beta-D-glucosaminyl-(1-&gt;3)-beta-D-galactosyl-(1-&gt;4)-beta-D-glucosyl-(1&lt;-&gt;1')-ceramide + GDP + H(+). It catalyses the reaction a neolactoside VI(3)-alpha-NeuNAc-nLc6Cer + GDP-beta-L-fucose = a neolactoside VI(3)-alpha-NeuAc,V(3)-alphaFuc-nLc6Cer + GDP + H(+). It carries out the reaction beta-D-galactosyl-(1-&gt;4)-N-acetyl-D-glucosamine + GDP-beta-L-fucose = beta-D-galactosyl-(1-&gt;4)-[alpha-L-fucosyl-(1-&gt;3)]-N-acetyl-D-glucosamine + GDP + H(+). The enzyme catalyses N-acetyl-alpha-neuraminosyl-(2-&gt;3)-beta-D-galactosyl-(1-&gt;4)-N-acetyl-beta-D-glucosamine + GDP-beta-L-fucose = N-acetyl-alpha-neuraminosyl-(2-&gt;3)-beta-D-galactosyl-(1-&gt;4)-[alpha-L-fucosyl-(1-&gt;3)]-N-acetyl-beta-D-glucosamine + GDP + H(+). The catalysed reaction is lactose + GDP-beta-L-fucose = beta-D-galactosyl-(1-&gt;4)-[alpha-L-fucosyl-(1-&gt;3)]-D-glucose + GDP + H(+). It catalyses the reaction alpha-L-Fuc-(1-&gt;2)-beta-D-Gal-(1-&gt;4)-D-Glc + GDP-beta-L-fucose = alpha-L-Fuc-(1-&gt;2)-beta-D-Gal-(1-&gt;4)-[alpha-L-Fuc-(1-&gt;3)]-D-Glc + GDP + H(+). It carries out the reaction a beta-D-galactosyl-(1-&gt;4)-N-acetyl-beta-D-6-sulfooxy-glucosaminyl derivative + GDP-beta-L-fucose = a beta-D-galactosyl-(1-&gt;4)-[alpha-L-fucosyl-(1-&gt;3)]-N-acetyl-beta-D-6-sulfooxy-glucosaminyl derivative + GDP + H(+). It participates in protein modification; protein glycosylation. Functionally, catalyzes the transfer of L-fucose, from a guanosine diphosphate-beta-L-fucose, to the N-acetyl glucosamine (GlcNAc) of a distal alpha2,3 sialylated lactosamine unit of a glycoprotein- or glycolipid-linked sialopolylactosamines chain or of a distal or internal lactosamine unit of a neutral glycoprotein- or glycolipid-linked polylactosamines chain through an alpha-1,3 glycosidic linkage and participates in surface expression of the sialyl Lewis X (sLe(x)), Lewis X (Le(x)) and non sialylated VIM2 determinants. Moreover transfers fucose to H-type 2 (Fucalpha1-2Galbeta1-4GlcNAc) chain acceptor substrates and participates in difucosylated sialyl Lewis x determinants. Also fucosylates a polylactosamine substrate having a 6 sulfate modification at the GlcNAc moiety and gives rise to sialyl and non-sialyl 6-sulfo lewis X. Does not have activity towards type 1 ((Galbeta1-3GlcNAc)) and H-type 1 chain (Fucalpha1-2Galbeta1-3GlcNAc) acceptors substrates. The polypeptide is 4-galactosyl-N-acetylglucosaminide 3-alpha-L-fucosyltransferase FUT6 (Gorilla gorilla gorilla (Western lowland gorilla)).